Consider the following 702-residue polypeptide: Elongation factor G 2 (702 aa).

The 283-residue stretch at 8–290 (ERYRNIGISA…AVIDYLPSPV (283 aa)) folds into the tr-type G domain. GTP is bound by residues 17 to 24 (AHIDAGKT), 88 to 92 (DTPGH), and 142 to 145 (NKMD).

This sequence belongs to the TRAFAC class translation factor GTPase superfamily. Classic translation factor GTPase family. EF-G/EF-2 subfamily.

It is found in the cytoplasm. Catalyzes the GTP-dependent ribosomal translocation step during translation elongation. During this step, the ribosome changes from the pre-translocational (PRE) to the post-translocational (POST) state as the newly formed A-site-bound peptidyl-tRNA and P-site-bound deacylated tRNA move to the P and E sites, respectively. Catalyzes the coordinated movement of the two tRNA molecules, the mRNA and conformational changes in the ribosome. The chain is Elongation factor G 2 from Cupriavidus metallidurans (strain ATCC 43123 / DSM 2839 / NBRC 102507 / CH34) (Ralstonia metallidurans).